The sequence spans 408 residues: Peptidase T (408 aa).

His78 is a binding site for Zn(2+). The active site involves Asp80. Asp140 is a Zn(2+) binding site. The active-site Proton acceptor is the Glu173. The Zn(2+) site is built by Glu174, Asp196, and His379.

It belongs to the peptidase M20B family. Zn(2+) serves as cofactor.

It localises to the cytoplasm. It catalyses the reaction Release of the N-terminal residue from a tripeptide.. Cleaves the N-terminal amino acid of tripeptides. The protein is Peptidase T of Escherichia coli O6:K15:H31 (strain 536 / UPEC).